Reading from the N-terminus, the 226-residue chain is Enolase-phosphatase E1 (226 aa).

It belongs to the HAD-like hydrolase superfamily. MasA/MtnC family. Monomer. The cofactor is Mg(2+).

The enzyme catalyses 5-methylsulfanyl-2,3-dioxopentyl phosphate + H2O = 1,2-dihydroxy-5-(methylsulfanyl)pent-1-en-3-one + phosphate. It functions in the pathway amino-acid biosynthesis; L-methionine biosynthesis via salvage pathway; L-methionine from S-methyl-5-thio-alpha-D-ribose 1-phosphate: step 3/6. Its pathway is amino-acid biosynthesis; L-methionine biosynthesis via salvage pathway; L-methionine from S-methyl-5-thio-alpha-D-ribose 1-phosphate: step 4/6. In terms of biological role, bifunctional enzyme that catalyzes the enolization of 2,3-diketo-5-methylthiopentyl-1-phosphate (DK-MTP-1-P) into the intermediate 2-hydroxy-3-keto-5-methylthiopentenyl-1-phosphate (HK-MTPenyl-1-P), which is then dephosphorylated to form the acireductone 1,2-dihydroxy-3-keto-5-methylthiopentene (DHK-MTPene). The protein is Enolase-phosphatase E1 of Shewanella sp. (strain W3-18-1).